The chain runs to 467 residues: Polygalacturonase (467 aa).

Positions Met-1–Ala-27 are cleaved as a signal peptide. Asp-283 (proton donor) is an active-site residue. Residue Asn-290 is glycosylated (N-linked (GlcNAc...) asparagine). His-306 is a catalytic residue.

Belongs to the glycosyl hydrolase 28 family.

The protein resides in the secreted. Its subcellular location is the cell wall. The catalysed reaction is (1,4-alpha-D-galacturonosyl)n+m + H2O = (1,4-alpha-D-galacturonosyl)n + (1,4-alpha-D-galacturonosyl)m.. Functionally, acts in concert with the pectinesterase, in the ripening process. Is involved in cell wall metabolism, specifically in polyuronide degradation. This chain is Polygalacturonase, found in Actinidia deliciosa (Kiwi).